We begin with the raw amino-acid sequence, 115 residues long: NADH-ubiquinone oxidoreductase chain 3 (115 aa).

The next 3 membrane-spanning stretches (helical) occupy residues 3–23 (LLMALFIDASLSLILISIAFW), 55–75 (FFLVAITFLLFDLEIALLLPL), and 84–104 (LSAMMVTSFILISVLALGLMY).

It belongs to the complex I subunit 3 family. As to quaternary structure, core subunit of respiratory chain NADH dehydrogenase (Complex I) which is composed of 45 different subunits. Interacts with TMEM186. Interacts with TMEM242.

The protein resides in the mitochondrion inner membrane. It carries out the reaction a ubiquinone + NADH + 5 H(+)(in) = a ubiquinol + NAD(+) + 4 H(+)(out). Its function is as follows. Core subunit of the mitochondrial membrane respiratory chain NADH dehydrogenase (Complex I) which catalyzes electron transfer from NADH through the respiratory chain, using ubiquinone as an electron acceptor. Essential for the catalytic activity of complex I. The chain is NADH-ubiquinone oxidoreductase chain 3 from Sigmodon ochrognathus (Yellow-nosed cotton rat).